The sequence spans 2531 residues: Neurogenic locus notch homolog protein 1 (2531 aa).

An N-terminal signal peptide occupies residues 1–18 (MPRLLAPLLCLTLLPALA). The Extracellular portion of the chain corresponds to 19–1725 (ARGLRCSQPS…VEPPLPSQLH (1707 aa)). EGF-like domains follow at residues 20 to 58 (RGLR…QRCQ), 59 to 99 (DPSP…PLCL), 102 to 139 (LANA…KSCQ), and 140 to 176 (QADP…PTCR). 33 cysteine pairs are disulfide-bonded: C24–C37, C31–C46, C48–C57, C63–C74, C68–C87, C89–C98, C106–C117, C111–C127, C129–C138, C144–C155, C149–C164, C166–C175, C182–C195, C189–C204, C206–C215, C222–C233, C227–C243, C245–C254, C261–C272, C266–C281, C283–C292, C299–C312, C306–C321, C323–C332, C339–C350, C344–C359, C361–C370, C376–C387, C381–C398, C400–C409, C416–C429, C423–C438, and C440–C449. A glycan (N-linked (GlcNAc...) asparagine) is linked at N41. S65 is a glycosylation site (O-linked (Glc...) serine). A glycan (O-linked (Fuc...) threonine) is linked at T73. The O-linked (Fuc...) threonine glycan is linked to T116. O-linked (Glc...) serine glycosylation is present at S146. One can recognise an EGF-like 5; calcium-binding domain in the interval 178–216 (DVNECSQNPGLCRHGGTCHNEIGSYRCACRATHTGPHCE). The O-linked (Fuc...) threonine glycan is linked to T194. In terms of domain architecture, EGF-like 6 spans 218-255 (PYVPCSPSPCQNGGTCRPTGDTTHECACLPGFAGQNCE). T232 carries O-linked (Fuc...) threonine; alternate glycosylation. A glycan (O-linked (GalNAc...) threonine; alternate) is linked at T232. In terms of domain architecture, EGF-like 7; calcium-binding spans 257-293 (NVDDCPGNNCKNGGACVDGVNTYNCRCPPEWTGQYCT). Residues 295–333 (DVDECQLMPNACQNGGTCHNSHGGYNCVCVNGWTGEDCS) form the EGF-like 8; calcium-binding domain. An O-linked (Fuc...) threonine glycan is attached at T311. The region spanning 335-371 (NIDDCASAACFQGATCHDRVASFYCECPHGRTGLLCH) is the EGF-like 9; calcium-binding domain. A glycan (O-linked (Glc...) serine) is linked at S341. O-linked (Fuc...) threonine glycosylation occurs at T349. Residues 372–410 (LNDACISNPCNEGSNCDTNPVNGKAICTCPSGYTGPACS) form the EGF-like 10 domain. An O-linked (Glc...) serine glycan is attached at S378. The region spanning 412–450 (DVDECALGANPCEHAGKCLNTLGSFECQCLQGYTGPRCE) is the EGF-like 11; calcium-binding domain. Residues 420-421 (AN) are interaction with DLL4. Ca(2+)-binding residues include T432 and S435. S435 carries O-linked (Glc...) serine glycosylation. Positions 448 to 452 (RCEID) are interaction with DLL4. 3 residues coordinate Ca(2+): D452, V453, and E455. The region spanning 452–488 (DVNECISNPCQNDATCLDQIGEFQCICMPGYEGVYCE) is the EGF-like 12; calcium-binding domain. 3 disulfides stabilise this stretch: C456/C467, C461/C476, and C478/C487. A glycan (O-linked (Glc...) serine) is linked at S458. O-linked (Fuc...) threonine glycosylation is present at T466. Ca(2+) contacts are provided by D469 and Q470. Ca(2+) contacts are provided by N490, T491, and E493. The region spanning 490 to 526 (NTDECASSPCLHNGRCVDKINEFLCQCPKGFSGHLCQ) is the EGF-like 13; calcium-binding domain. Disulfide bonds link C494–C505, C499–C514, C516–C525, C532–C543, C537–C552, C554–C563, C570–C580, C575–C589, C591–C600, C607–C618, C612–C627, C629–C638, C645–C655, C650–C664, C666–C675, C682–C693, C687–C702, C704–C713, C720–C730, C725–C739, C741–C750, C757–C768, C762–C777, C779–C788, C795–C806, C800–C815, C817–C826, C833–C844, C838–C855, C857–C866, C873–C884, C878–C893, C895–C904, C911–C922, C916–C931, C933–C942, C949–C960, C954–C969, C971–C980, C987–C998, C992–C1007, C1009–C1018, C1025–C1036, C1030–C1045, C1047–C1056, C1063–C1074, C1068–C1083, C1085–C1094, C1101–C1122, C1116–C1131, C1133–C1142, C1149–C1160, C1154–C1169, C1171–C1180, C1187–C1198, C1192–C1207, C1209–C1218, C1225–C1244, C1238–C1253, C1255–C1264, C1271–C1284, C1276–C1293, C1295–C1304, C1311–C1322, C1316–C1334, C1336–C1345, C1352–C1363, C1357–C1372, C1374–C1383, C1391–C1403, C1397–C1414, C1416–C1425, C1449–C1472, C1454–C1467, and C1463–C1479. Residue S496 is glycosylated (O-linked (Glc...) serine). 2 residues coordinate Ca(2+): D507 and K508. In terms of domain architecture, EGF-like 14; calcium-binding spans 528–564 (DVDECASTPCKNGAKCLDGPNTYTCVCTEGYTGTHCE). S534 is a glycosylation site (O-linked (Glc...) serine). Positions 566 to 601 (DIDECDPDPCHYGLCKDGVATFTCLCQPGYTGHHCE) constitute an EGF-like 15; calcium-binding domain. One can recognise an EGF-like 16; calcium-binding domain in the interval 603–639 (NINECHSQPCRHGGTCQDRDNYYLCLCLKGTTGPNCE). S609 carries O-linked (Glc...) serine glycosylation. Residue T617 is glycosylated (O-linked (Fuc...) threonine). Positions 641-676 (NLDDCASNPCDSGTCLDKIDGYECACEPGYTGSMCN) constitute an EGF-like 17; calcium-binding domain. O-linked (Glc...) serine glycosylation is present at S647. Positions 678 to 714 (NIDECAGSPCHNGGTCEDGIAGFTCRCPEGYHDPTCL) constitute an EGF-like 18; calcium-binding domain. A glycan (O-linked (Fuc...) threonine) is linked at T692. The region spanning 716–751 (EVNECNSNPCIHGACRDGLNGYKCDCAPGWSGTNCD) is the EGF-like 19; calcium-binding domain. O-linked (Glc...) serine glycosylation occurs at S722. In terms of domain architecture, EGF-like 20; calcium-binding spans 753–789 (NNNECESNPCVNGGTCKDMTSGYVCTCREGFSGPNCQ). S759 carries an O-linked (Glc...) serine glycan. An O-linked (Fuc...) threonine glycan is attached at T767. O-linked (GlcNAc) serine glycosylation occurs at S784. Residues 791–827 (NINECASNPCLNQGTCIDDVAGYKCNCPLPYTGATCE) form the EGF-like 21; calcium-binding domain. Residue S797 is glycosylated (O-linked (Glc...) serine). A glycan (O-linked (Fuc...) threonine) is linked at T805. In terms of domain architecture, EGF-like 22 spans 829-867 (VLAPCATSPCKNSGVCKESEDYESFSCVCPTGWQGQTCE). The 37-residue stretch at 869-905 (DINECVKSPCRHGASCQNTNGSYRCLCQAGYTGRNCE) folds into the EGF-like 23; calcium-binding domain. A glycan (N-linked (GlcNAc...) asparagine) is linked at N888. O-linked (GlcNAc) threonine glycosylation occurs at T900. In terms of domain architecture, EGF-like 24 spans 907 to 943 (DIDDCRPNPCHNGGSCTDGVNAAFCDCLPGFQGAFCE). S921 is a glycosylation site (O-linked (Fuc) serine). The 37-residue stretch at 945–981 (DINECASNPCQNGANCTDCVDSYTCTCPTGFNGIHCE) folds into the EGF-like 25; calcium-binding domain. S951 is a glycosylation site (O-linked (Glc...) serine). An N-linked (GlcNAc...) asparagine glycan is attached at N959. The region spanning 983–1019 (NTPDCTESSCFNGGTCVDGINSFTCLCPPGFTGSYCQ) is the EGF-like 26 domain. O-linked (Fuc...) threonine glycosylation is present at T997. The region spanning 1021–1057 (DVNECDSRPCLHGGTCQDSYGTYKCTCPQGYTGLNCQ) is the EGF-like 27; calcium-binding domain. The O-linked (Glc...) serine glycan is linked to S1027. The O-linked (Fuc...) threonine glycan is linked to T1035. 2 consecutive EGF-like domains span residues 1059–1095 (LVRW…FNCD) and 1097–1143 (LSVS…SYCE). An O-linked (Glc...) serine glycan is attached at S1065. Residues 1145 to 1181 (EVDECSPNPCQNGATCTDYLGGFSCKCVAGYHGSNCS) enclose the EGF-like 30; calcium-binding domain. T1159 carries an O-linked (Fuc...) threonine glycan. N1179 carries N-linked (GlcNAc...) asparagine glycosylation. The 37-residue stretch at 1183 to 1219 (EINECLSQPCQNGGTCIDLTNTYKCSCPRGTQGVHCE) folds into the EGF-like 31; calcium-binding domain. A glycan (O-linked (Glc...) serine) is linked at S1189. An O-linked (Fuc...) threonine glycan is attached at T1197. The EGF-like 32; calcium-binding domain maps to 1221–1265 (NVDDCHPPLDPASRSPKCFNNGTCVDQVGGYTCTCPPGFVGERCE). N1241 carries N-linked (GlcNAc...) asparagine glycosylation. 4 consecutive EGF-like domains span residues 1267–1305 (DVNE…RRCE), 1307–1346 (VING…ATCE), 1348–1384 (DART…PECQ), and 1387–1426 (ASSP…LLCH). Residue S1273 is glycosylated (O-linked (Glc...) serine). O-linked (Fuc...) threonine glycosylation occurs at T1362. T1379 is a glycosylation site (O-linked (GlcNAc...) threonine). O-linked (Fuc...) threonine; alternate glycosylation occurs at T1402. T1402 carries an O-linked (GalNAc...) threonine; alternate glycan. LNR repeat units lie at residues 1449-1489 (CELP…PWKN), 1490-1531 (CTQS…CNPL), and 1532-1571 (YDQY…RLAA). D1457, N1460, D1475, and D1478 together coordinate Ca(2+). N-linked (GlcNAc...) asparagine glycosylation occurs at N1489. Cystine bridges form between C1490/C1514, C1496/C1509, C1505/C1521, C1536/C1549, and C1545/C1561. N-linked (GlcNAc...) asparagine glycosylation occurs at N1587. T1715 carries an O-linked (GalNAc...) threonine glycan. The tract at residues 1718 to 1750 (PPLPSQLHLMYVAAAAFVLLFFVGCGVLLSRKR) is interaction with PSEN1. Residues 1726 to 1746 (LMYVAAAAFVLLFFVGCGVLL) traverse the membrane as a helical segment. Residues 1747-2531 (SRKRRRQHGQ…QITHIPEAFK (785 aa)) are Cytoplasmic-facing. A Glycyl lysine isopeptide (Lys-Gly) (interchain with G-Cter in ubiquitin) cross-link involves residue K1749. The segment at 1770–1798 (KKKRREPLGEDSVGLKPLKNASDGALMDD) is disordered. At T1851 the chain carries Phosphothreonine. 5 ANK repeats span residues 1917-1946 (TGET…DANI), 1950-1980 (MGRT…DLDA), 1984-2013 (DGTT…DVNA), 2017-2046 (LGKS…NKDM), and 2050-2079 (KEET…NRDI). The segment at 1937 to 1945 (LLEASADAN) is HIF1AN-binding. N1945 is subject to (3S)-3-hydroxyasparagine; by HIF1AN. The interval 2004–2012 (LINSHADVN) is HIF1AN-binding. At N2012 the chain carries (3S)-3-hydroxyasparagine; by HIF1AN. 3 disordered regions span residues 2141 to 2185 (SATQ…DSSS), 2382 to 2428 (QPQN…SLPV), and 2440 to 2531 (PTSL…EAFK). Positions 2382-2395 (QPQNLQPPSQPHLS) are enriched in low complexity. A compositionally biased stretch (polar residues) spans 2440–2478 (PTSLPSSMVPPMTTTQFLTPPSQHSYSSSPVDNTPSHQL). Residues 2488-2503 (PSPESPDQWSSSSPHS) are compositionally biased toward low complexity. The segment covering 2504-2524 (NISDWSEGISSPPTSMPSQIT) has biased composition (polar residues).

Belongs to the NOTCH family. In terms of assembly, heterodimer of a C-terminal fragment N(TM) and an N-terminal fragment N(EC) which are probably linked by disulfide bonds. Interacts with DNER, DTX1, DTX2 and RBPJ/RBPSUH. Also interacts with MAML1, MAML2 and MAML3 which act as transcriptional coactivators for NOTCH1. Notch 1 intracellular domain interacts with SNW1; the interaction involves multimerized NOTCH1 NICD and is implicated in a formation of an intermediate preactivation complex which associates with DNA-bound CBF-1/RBPJ. The activated membrane-bound form interacts with AAK1 which promotes NOTCH1 stabilization. Forms a trimeric complex with FBXW7 and SGK1. Interacts with HIF1AN. HIF1AN negatively regulates the function of notch intracellular domain (NICD), accelerating myogenic differentiation. Interacts (via NICD) with SNAI1 (via zinc fingers); the interaction induces SNAI1 degradation via MDM2-mediated ubiquitination and inhibits SNAI1-induced cell invasion. Interacts (via NICD) with MDM2A. Interacts (via NICD) with BCL6; the interaction decreases MAML1 recruitment by NOTCH1 NICD on target genes DNA and inhibits NOTCH1 transactivation activity. Interacts with THBS4. Interacts (via the EGF-like repeat region) with CCN3 (via CTCK domain). Interacts (via EGF-like domains) with DLL4 (via N-terminal DSL and MNNL domains). Interacts with ZMIZ1. Interacts (via NICD domain) with MEGF10 (via the cytoplasmic domain). Interacts with DLL1 and JAG1. Interacts (via NICD domain) with PRAG1. Forms a complex with PRAG1, N1ICD and MAML1, in a MAML1-dependent manner. Interacts (via transmembrane region) with PSEN1; the interaction is direct. Interacts with ZFP64. Synthesized in the endoplasmic reticulum as an inactive form which is proteolytically cleaved by a furin-like convertase in the trans-Golgi network before it reaches the plasma membrane to yield an active, ligand-accessible form. Cleavage results in a C-terminal fragment N(TM) and a N-terminal fragment N(EC). Following ligand binding, it is cleaved by ADAM17 to yield a membrane-associated intermediate fragment called notch extracellular truncation (NEXT). Following endocytosis, this fragment is then cleaved by one of the catalytic subunits of gamma-secretase (PSEN1 or PSEN2) to release a Notch-derived peptide containing the intracellular domain (NICD) from the membrane. In terms of processing, phosphorylated. Post-translationally, O-glycosylated on the EGF-like domains. O-glucosylated at Ser-435 by KDELC1 and KDELC2. Contains both O-linked fucose and O-linked glucose in the EGF-like domains 11, 12 and 13, which are interacting with the residues on DLL4. O-linked glycosylation by GALNT11 is involved in determination of left/right symmetry: glycosylation promotes activation of NOTCH1, possibly by promoting cleavage by ADAM17, modulating the balance between motile and immotile (sensory) cilia at the left-right organiser (LRO). MFNG-, RFNG- and LFNG-mediated modification of O-fucose residues at specific EGF-like domains results in inhibition of its activation by JAG1 and enhancement of its activation by DLL1 via an increased binding to DLL1. Ubiquitinated. Undergoes 'Lys-29'-linked polyubiquitination by ITCH; promotes the lysosomal degradation of non-activated internalized NOTCH1. Deubiquitination by USP12 is required for transport of internalized non-activated receptor from late endosomes to lysosomes for degradation. Monoubiquitination at Lys-1749 is required for activation by gamma-secretase cleavage, it promotes interaction with AAK1, which stabilizes it. Deubiquitination by EIF3F is necessary for nuclear import of activated Notch. In terms of processing, hydroxylated at Asn-1945 and Asn-2012 by HIF1AN. Hydroxylation reduces affinity for HI1AN and may thus indirectly modulate negative regulation of NICD. In terms of tissue distribution, expressed in the brain, kidney and spleen. Expressed in postnatal central nervous system (CNS) germinal zones and, in early postnatal life, within numerous cells throughout the CNS. Found in both subventricular and ventricular germinal zones.

Its subcellular location is the cell membrane. It localises to the late endosome membrane. The protein resides in the nucleus. In terms of biological role, functions as a receptor for membrane-bound ligands Jagged-1 (JAG1), Jagged-2 (JAG2) and Delta-1 (DLL1) to regulate cell-fate determination. Upon ligand activation through the released notch intracellular domain (NICD) it forms a transcriptional activator complex with RBPJ/RBPSUH and activates genes of the enhancer of split locus. Affects the implementation of differentiation, proliferation and apoptotic programs. Involved in angiogenesis; negatively regulates endothelial cell proliferation and migration and angiogenic sprouting. Involved in the maturation of both CD4(+) and CD8(+) cells in the thymus. Important for follicular differentiation and possibly cell fate selection within the follicle. During cerebellar development, functions as a receptor for neuronal DNER and is involved in the differentiation of Bergmann glia. Represses neuronal and myogenic differentiation. May play an essential role in postimplantation development, probably in some aspect of cell specification and/or differentiation. May be involved in mesoderm development, somite formation and neurogenesis. May enhance HIF1A function by sequestering HIF1AN away from HIF1A. Required for the THBS4 function in regulating protective astrogenesis from the subventricular zone (SVZ) niche after injury. Involved in determination of left/right symmetry by modulating the balance between motile and immotile (sensory) cilia at the left-right organiser (LRO). The protein is Neurogenic locus notch homolog protein 1 (Notch1) of Rattus norvegicus (Rat).